Here is a 960-residue protein sequence, read N- to C-terminus: Endoplasmic reticulum aminopeptidase 2 (960 aa).

Topologically, residues 1–20 are cytoplasmic; that stretch reads MFHSSAMVNSHRKPMFNIHR. The chain crosses the membrane as a helical; Signal-anchor for type II membrane protein span at residues 21-40; it reads GFYCLTAILPQICICSQFSV. Residues 41–960 lie on the Lumenal side of the membrane; the sequence is PSSYHFTEDP…TLRTWLMVNT (920 aa). N-linked (GlcNAc...) asparagine glycosylation is found at Asn85 and Asn119. A substrate-binding site is contributed by Glu200. Asn219 is a glycosylation site (N-linked (GlcNAc...) asparagine). 334-338 contributes to the substrate binding site; the sequence is GAMEN. Residue His370 coordinates Zn(2+). The Proton acceptor role is filled by Glu371. The Zn(2+) site is built by His374 and Glu393. Asn405 carries an N-linked (GlcNAc...) asparagine glycan. Cys421 and Cys460 are disulfide-bonded. An N-linked (GlcNAc...) asparagine glycan is attached at Asn650. Cysteines 759 and 766 form a disulfide.

This sequence belongs to the peptidase M1 family. Heterodimer with ERAP1. Zn(2+) is required as a cofactor. N-glycosylated. As to expression, ubiquitously expressed. Highly expressed in spleen and leukocytes.

The protein resides in the endoplasmic reticulum membrane. Aminopeptidase that plays a central role in peptide trimming, a step required for the generation of most HLA class I-binding peptides. Peptide trimming is essential to customize longer precursor peptides to fit them to the correct length required for presentation on MHC class I molecules. Preferentially hydrolyzes the basic residues Arg and Lys. The polypeptide is Endoplasmic reticulum aminopeptidase 2 (ERAP2) (Homo sapiens (Human)).